A 138-amino-acid chain; its full sequence is Cysteine desulfuration protein SufE (138 aa).

Cys-51 (cysteine persulfide intermediate) is an active-site residue.

It belongs to the SufE family. In terms of assembly, homodimer. Interacts with SufS.

It is found in the cytoplasm. It functions in the pathway cofactor biosynthesis; iron-sulfur cluster biosynthesis. Its function is as follows. Participates in cysteine desulfuration mediated by SufS. Cysteine desulfuration mobilizes sulfur from L-cysteine to yield L-alanine and constitutes an essential step in sulfur metabolism for biosynthesis of a variety of sulfur-containing biomolecules. Functions as a sulfur acceptor for SufS, by mediating the direct transfer of the sulfur atom from the S-sulfanylcysteine of SufS, an intermediate product of cysteine desulfuration process. The polypeptide is Cysteine desulfuration protein SufE (Escherichia coli O45:K1 (strain S88 / ExPEC)).